Reading from the N-terminus, the 638-residue chain is Asparagine--tRNA ligase, cytoplasmic 2 (638 aa).

Over residues 1-16 (MESHGKTHQKEHDNDL) the composition is skewed to basic and acidic residues. Disordered stretches follow at residues 1 to 23 (MESH…PITL) and 62 to 87 (VKKN…DQAH).

It belongs to the class-II aminoacyl-tRNA synthetase family.

The protein localises to the cytoplasm. It localises to the cytosol. The enzyme catalyses tRNA(Asn) + L-asparagine + ATP = L-asparaginyl-tRNA(Asn) + AMP + diphosphate + H(+). The chain is Asparagine--tRNA ligase, cytoplasmic 2 from Arabidopsis thaliana (Mouse-ear cress).